Here is a 243-residue protein sequence, read N- to C-terminus: GIEKIISRSMFDQMLKHRNNPACPAKGFYTYDAFLAAAKSFPSFGTTGSTDVRKRELAAFLGQTSHETTGGWPSAPDGPYAWGYCFLKERNPSSNYCAPSPRYPCAPGKSYYGRGPLQLSWNYNYGPCGEALRVNLLGNPDLVATDRVLSFKTALWFWMTPQAPKPSCHDVLTGRWQPSAADTAAGRLPGYGVLTNLLNGGLECGKGPNPQVADRLGFFRRYCGLLGVGTGNNLDCYNQRPFG.

Intrachain disulfides connect Cys23–Cys85, Cys97–Cys105, and Cys223–Cys236. Residue Glu67 is the Proton donor of the active site.

It localises to the vacuole. The enzyme catalyses Random endo-hydrolysis of N-acetyl-beta-D-glucosaminide (1-&gt;4)-beta-linkages in chitin and chitodextrins.. Defense against chitin-containing fungal pathogens. Shows activity on chitin, tetra-N-acetylglucosamine and chitosan. This Carica papaya (Papaya) protein is Endochitinase.